Reading from the N-terminus, the 484-residue chain is UDP-N-acetylmuramoyl-L-alanyl-D-glutamate--2,6-diaminopimelate ligase (484 aa).

S30 contacts UDP-N-acetyl-alpha-D-muramoyl-L-alanyl-D-glutamate. 109–115 is a binding site for ATP; it reads GTNGKTS. UDP-N-acetyl-alpha-D-muramoyl-L-alanyl-D-glutamate contacts are provided by residues 151–152, S178, and R186; that span reads TT. Residue K218 is modified to N6-carboxylysine. Residues R379, 403 to 406, G455, and E459 contribute to the meso-2,6-diaminopimelate site; that span reads DNPR. The Meso-diaminopimelate recognition motif motif lies at 403–406; it reads DNPR.

The protein belongs to the MurCDEF family. MurE subfamily. Mg(2+) is required as a cofactor. Carboxylation is probably crucial for Mg(2+) binding and, consequently, for the gamma-phosphate positioning of ATP.

The protein resides in the cytoplasm. It carries out the reaction UDP-N-acetyl-alpha-D-muramoyl-L-alanyl-D-glutamate + meso-2,6-diaminopimelate + ATP = UDP-N-acetyl-alpha-D-muramoyl-L-alanyl-gamma-D-glutamyl-meso-2,6-diaminopimelate + ADP + phosphate + H(+). Its pathway is cell wall biogenesis; peptidoglycan biosynthesis. Functionally, catalyzes the addition of meso-diaminopimelic acid to the nucleotide precursor UDP-N-acetylmuramoyl-L-alanyl-D-glutamate (UMAG) in the biosynthesis of bacterial cell-wall peptidoglycan. This chain is UDP-N-acetylmuramoyl-L-alanyl-D-glutamate--2,6-diaminopimelate ligase, found in Clostridioides difficile (strain 630) (Peptoclostridium difficile).